A 642-amino-acid polypeptide reads, in one-letter code: Threonine--tRNA ligase (642 aa).

Residues 1–61 (MPVITLPDGS…EHDAQIAIIT (61 aa)) enclose the TGS domain. The catalytic stretch occupies residues 243-534 (DHRKIGKQLD…LTEEYAGFYP (292 aa)). Positions 334, 385, and 511 each coordinate Zn(2+).

The protein belongs to the class-II aminoacyl-tRNA synthetase family. Homodimer. Requires Zn(2+) as cofactor.

It is found in the cytoplasm. It carries out the reaction tRNA(Thr) + L-threonine + ATP = L-threonyl-tRNA(Thr) + AMP + diphosphate + H(+). Functionally, catalyzes the attachment of threonine to tRNA(Thr) in a two-step reaction: L-threonine is first activated by ATP to form Thr-AMP and then transferred to the acceptor end of tRNA(Thr). Also edits incorrectly charged L-seryl-tRNA(Thr). The chain is Threonine--tRNA ligase from Sodalis glossinidius (strain morsitans).